A 152-amino-acid chain; its full sequence is Clitocypin-4/-3 (152 aa).

It belongs to the protease inhibitor I48 family. As to quaternary structure, homodimer.

Functionally, binds and inhibits cysteine proteinases. Inhibits most strongly papain and cathepsin L, more weakly bromelain and cathepsin B while it is completely ineffective against cathepsin H. This chain is Clitocypin-4/-3 (clt4), found in Clitocybe nebularis (Clouded agaric).